A 147-amino-acid polypeptide reads, in one-letter code: Angiogenin (147 aa).

An N-terminal signal peptide occupies residues M1 to A24. Q25 is subject to Pyrrolidone carboxylic acid. The active-site Proton acceptor is the H37. R45 and D46 together coordinate tRNA. Disulfide bonds link C50-C105, C63-C116, and C81-C131. The short motif at R55–L59 is the Nucleolar localization signal element. C105 and V127 together coordinate tRNA. The active-site Proton donor is the H138.

It belongs to the pancreatic ribonuclease family. As to quaternary structure, homodimer. Interacts with RNH1; inhibiting ANG ribonuclease activity. Interacts with PCNA.

The protein resides in the secreted. Its subcellular location is the nucleus. It is found in the nucleolus. The protein localises to the cytoplasm. It localises to the stress granule. Its activity is regulated as follows. Has weak tRNA ribonuclease activity by itself due to partial autoinhibition by its C-terminus, which folds into a short alpha-helix that partially occludes the substrate-binding site. In absence of stress, the ribonuclease activity is inhibited by RNH1 in the cytoplasm. In response to stress, dissociates from RNH1 in the cytoplasm and associates with cytoplasmic ribosomes with vacant A-sites: ribosomes directly activate the tRNA ribonuclease activity of ANG by refolding the C-terminal alpha-helix. In response to stress, the angiogenic activity of ANG is inhibited by RNH1 in the nucleus. Its function is as follows. Secreted ribonuclease that can either promote or restrict cell proliferation of target cells, depending on the context. Endocytosed in target cells via its receptor PLXNB2 and translocates to the cytoplasm or nucleus. Under stress conditions, localizes to the cytoplasm and promotes the assembly of stress granules (SGs): specifically cleaves a subset of tRNAs within anticodon loops to produce tRNA-derived stress-induced fragments (tiRNAs), resulting in translation repression and inhibition of cell proliferation. tiRNas also prevent formation of apoptosome, thereby promoting cell survival. Preferentially cleaves RNAs between a pyrimidine and an adenosine residue, suggesting that it cleaves the anticodon loop of tRNA(Ala) (32-UUAGCAU-38) after positions 33 and 36. Cleaves a subset of tRNAs, including tRNA(Ala), tRNA(Glu), tRNA(Gly), tRNA(Lys), tRNA(Val), tRNA(His), tRNA(Asp) and tRNA(Sec). Under growth conditions and in differentiated cells, translocates to the nucleus and stimulates ribosomal RNA (rRNA) transcription, including that containing the initiation site sequences of 45S rRNA, thereby promoting cell growth and proliferation. Angiogenin induces vascularization of normal and malignant tissues via its ability to promote rRNA transcription. Involved in hematopoietic stem and progenitor cell (HSPC) growth and survival by promoting rRNA transcription in growth conditions and inhibiting translation in response to stress, respectively. Mediates the crosstalk between myeloid and intestinal epithelial cells to protect the intestinal epithelial barrier integrity: secreted by myeloid cells and promotes intestinal epithelial cells proliferation and survival. Also mediates osteoclast-endothelial cell crosstalk in growing bone: produced by osteoclasts and protects the neighboring vascular cells against senescence by promoting rRNA transcription. The polypeptide is Angiogenin (ANG) (Gorilla gorilla gorilla (Western lowland gorilla)).